Here is a 402-residue protein sequence, read N- to C-terminus: Phosphoglycerate kinase (402 aa).

Residues 24 to 26 (DFN), R40, 63 to 66 (HFGR), R122, and R155 each bind substrate. ATP is bound by residues K206, G297, E328, and 357 to 360 (GGDS).

The protein belongs to the phosphoglycerate kinase family. In terms of assembly, monomer.

It is found in the cytoplasm. The enzyme catalyses (2R)-3-phosphoglycerate + ATP = (2R)-3-phospho-glyceroyl phosphate + ADP. Its pathway is carbohydrate degradation; glycolysis; pyruvate from D-glyceraldehyde 3-phosphate: step 2/5. The protein is Phosphoglycerate kinase of Synechococcus elongatus (strain ATCC 33912 / PCC 7942 / FACHB-805) (Anacystis nidulans R2).